Reading from the N-terminus, the 285-residue chain is Transmembrane protein 53-B (285 aa).

A helical membrane pass occupies residues 165-185 (FLALAAFAIMVIILRIVLYPV).

Belongs to the TMEM53 family.

It localises to the nucleus outer membrane. Its function is as follows. Ensures normal bone formation, through the negative regulation of bone morphogenetic protein (BMP) signaling in osteoblast lineage cells by blocking cytoplasm-nucleus translocation of phosphorylated SMAD proteins. The sequence is that of Transmembrane protein 53-B (tmem53-b) from Xenopus laevis (African clawed frog).